Consider the following 120-residue polypeptide: ESAT-6-like protein EsxQ (120 aa).

Belongs to the WXG100 family. ESAT-6 subfamily.

Its subcellular location is the secreted. The sequence is that of ESAT-6-like protein EsxQ from Mycobacterium bovis (strain ATCC BAA-935 / AF2122/97).